The chain runs to 356 residues: MSLWVDKYRPCSLGRLDYHKEQAAQLRNLVQCGDFPHLLVYGPSGAGKKTRIMCILRELYGVGVEKLRIEHQTITTPSKKKIEISTIASNYHLEVNPSDAGNSDRVVIQEMLKTVAQSQQLETNSQRDFKVVLLTEVDKLTKDAQHALRRTMEKYMSTCRLILCCNSTSKVIPPIRSRCLAVRVPAPSIEDICHVLSTVCKKEGLNLPSQLAHRLAEKSCRNLRKALLMCEACRVQQYPFTADQEIPETDWEVYLRETANAIVSQQTPQRLLEVRGRLYELLTHCIPPEIIMKGLLSELLHNCDGQLKGEVAQMAAYYEHRLQLGSKAIYHLEAFVAKFMALYKKFMEDGLEGMMF.

The residue at position 20 (K20) is an N6-acetyllysine. The residue at position 125 (S125) is a Phosphoserine.

The protein belongs to the activator 1 small subunits family. In terms of assembly, subunit of the RFC complex, an heteropentameric complex consisting of a large subunit RFC1 and four small subunits RFC2, RFC3, RFC4 and RFC5; the RFC complex interacts with PCNA. Forms an heterotetrameric complex with RFC2, RFC4 and RFC5; this complex has ATPase activity but is not stimulated by PCNA. The heterotetramer of subunits RFC2, RFC3, RFC4 and RFC5 interacts with RAD17. Interacts with CNTD1; this interaction facilitates crossover formation.

It is found in the nucleus. In terms of biological role, subunit of the replication factor C (RFC) complex which acts during elongation of primed DNA templates by DNA polymerases delta and epsilon, and is necessary for ATP-dependent loading of proliferating cell nuclear antigen (PCNA) onto primed DNA. This is Replication factor C subunit 3 (RFC3) from Homo sapiens (Human).